The sequence spans 148 residues: Large ribosomal subunit protein bL9 (148 aa).

The protein belongs to the bacterial ribosomal protein bL9 family.

Binds to the 23S rRNA. This is Large ribosomal subunit protein bL9 from Bacillus cytotoxicus (strain DSM 22905 / CIP 110041 / 391-98 / NVH 391-98).